A 213-amino-acid polypeptide reads, in one-letter code: Methylthioribulose-1-phosphate dehydratase (213 aa).

2 residues coordinate Zn(2+): His97 and His99.

This sequence belongs to the aldolase class II family. MtnB subfamily. In terms of assembly, homotetramer. Zn(2+) is required as a cofactor.

It carries out the reaction 5-(methylsulfanyl)-D-ribulose 1-phosphate = 5-methylsulfanyl-2,3-dioxopentyl phosphate + H2O. Its pathway is amino-acid biosynthesis; L-methionine biosynthesis via salvage pathway; L-methionine from S-methyl-5-thio-alpha-D-ribose 1-phosphate: step 2/6. Its function is as follows. Catalyzes the dehydration of methylthioribulose-1-phosphate (MTRu-1-P) into 2,3-diketo-5-methylthiopentyl-1-phosphate (DK-MTP-1-P). The chain is Methylthioribulose-1-phosphate dehydratase from Geobacillus sp. (strain WCH70).